The sequence spans 171 residues: 16S rRNA aminocarboxypropyltransferase (171 aa).

Residues Thr-18, Leu-68, Leu-91, and Ser-110 each contribute to the S-adenosyl-L-methionine site.

The protein belongs to the TDD superfamily. TSR3 family.

The protein localises to the cytoplasm. The catalysed reaction is an N(1)-methylpseudouridine in rRNA + S-adenosyl-L-methionine = N(1)-methyl-N(3)-[(3S)-3-amino-3-carboxypropyl]pseudouridine in rRNA + S-methyl-5'-thioadenosine + H(+). Aminocarboxypropyltransferase that catalyzes the aminocarboxypropyl transfer on pseudouridine corresponding to position 914 in M.jannaschii 16S rRNA. It constitutes the last step in biosynthesis of the hypermodified N1-methyl-N3-(3-amino-3-carboxypropyl) pseudouridine (m1acp3-Psi). This is 16S rRNA aminocarboxypropyltransferase from Methanosphaera stadtmanae (strain ATCC 43021 / DSM 3091 / JCM 11832 / MCB-3).